Reading from the N-terminus, the 697-residue chain is MSKINKLEHIRNIGICAHIDAGKTTTTERILYYTGKSHKIGEVHEGGATMDWMEQEQERGITITSAATTCRWQDKIINIIDTPGHVDFTIEVERSLRVLDGAVAVFDGVAGVEPQSETVWRQADKYNVPRMCFVNKMDRMGADFYRCVEMLKDRLGAKPLVIQLPVGIEENFKGIIDLVKMKVVIWKDESLGAEYFEEDIPADMKDKAEEYRAKLLDMVVELDDHVMEKYLSGEEVTAEEIKRLIRKGTISAAFYPVLCGSAFKNKGVQPLLDAVVDFLPSPTDIGIVKGMEVSTGEEKDFPISVTEPFAALAFKIMNDPFVGSLTFIRIYSGKITSGTTVINTVKNKREKIGRMLLMHSNNREDVKEASAGDIVALAGLKDTTTGDTLSDIDQPVILERMEFPEPVIELAVEPKSTADQEKMGLALSRLAAEDPSFRVSTDHETGQTVIKGMGELHLEIIIDRMRREFKVEANIGAPQVAYRETITKACEIDYTHKKQSGGAGQFARVKIIFEPLKDVKDLKDEDKIFVFESKIIGGAVPKEYIPGVEKGLNNIRETGVIAGYPMIDFKATLVDGAFHDVDSSVLAFEIAAKAAFREGMPKGNPKLLEPIMQVEVITPDEYMGDIIGDLNSRRGQIQSMDPRGNAQVVTANVPLAEMFGYVNTLRSLSQGRAQFSMIFSHYDQVPSQVADIIKAKK.

Residues 8 to 283 enclose the tr-type G domain; it reads EHIRNIGICA…AVVDFLPSPT (276 aa). GTP contacts are provided by residues 17 to 24, 81 to 85, and 135 to 138; these read AHIDAGKT, DTPGH, and NKMD.

The protein belongs to the TRAFAC class translation factor GTPase superfamily. Classic translation factor GTPase family. EF-G/EF-2 subfamily.

The protein resides in the cytoplasm. Functionally, catalyzes the GTP-dependent ribosomal translocation step during translation elongation. During this step, the ribosome changes from the pre-translocational (PRE) to the post-translocational (POST) state as the newly formed A-site-bound peptidyl-tRNA and P-site-bound deacylated tRNA move to the P and E sites, respectively. Catalyzes the coordinated movement of the two tRNA molecules, the mRNA and conformational changes in the ribosome. In Rickettsia massiliae (strain Mtu5), this protein is Elongation factor G.